A 700-amino-acid chain; its full sequence is Elongation factor G 1 (700 aa).

The tr-type G domain occupies 8–290 (ERYRNIGISA…AVIEYLPSPI (283 aa)). GTP-binding positions include 17 to 24 (AHIDAGKT), 88 to 92 (DTPGH), and 142 to 145 (NKMD).

This sequence belongs to the TRAFAC class translation factor GTPase superfamily. Classic translation factor GTPase family. EF-G/EF-2 subfamily.

The protein resides in the cytoplasm. In terms of biological role, catalyzes the GTP-dependent ribosomal translocation step during translation elongation. During this step, the ribosome changes from the pre-translocational (PRE) to the post-translocational (POST) state as the newly formed A-site-bound peptidyl-tRNA and P-site-bound deacylated tRNA move to the P and E sites, respectively. Catalyzes the coordinated movement of the two tRNA molecules, the mRNA and conformational changes in the ribosome. This Bordetella avium (strain 197N) protein is Elongation factor G 1.